The following is a 119-amino-acid chain: Large ribosomal subunit protein uL22 (119 aa).

The protein belongs to the universal ribosomal protein uL22 family. In terms of assembly, part of the 50S ribosomal subunit.

This protein binds specifically to 23S rRNA; its binding is stimulated by other ribosomal proteins, e.g. L4, L17, and L20. It is important during the early stages of 50S assembly. It makes multiple contacts with different domains of the 23S rRNA in the assembled 50S subunit and ribosome. In terms of biological role, the globular domain of the protein is located near the polypeptide exit tunnel on the outside of the subunit, while an extended beta-hairpin is found that lines the wall of the exit tunnel in the center of the 70S ribosome. This Rickettsia felis (strain ATCC VR-1525 / URRWXCal2) (Rickettsia azadi) protein is Large ribosomal subunit protein uL22.